Reading from the N-terminus, the 145-residue chain is Hemoglobin fetal subunit beta (145 aa).

Residues 1-145 (MLSAEEKASV…VANALAHRYH (145 aa)) enclose the Globin domain. Heme b-binding residues include His62 and His91.

Belongs to the globin family. Heterotetramer of two alpha chains and two beta chains. In terms of tissue distribution, red blood cells.

Its function is as follows. Involved in oxygen transport from the lung to the various peripheral tissues. In Capra hircus (Goat), this protein is Hemoglobin fetal subunit beta.